Here is a 55-residue protein sequence, read N- to C-terminus: ATP synthase F(0) complex subunit 8 (55 aa).

A helical transmembrane segment spans residues 7-24; sequence NPWFFIMLLSWLTFSLII. Residues 35-55 form a disordered region; the sequence is NPPSNKTTTHTKTTPWTWPWT. The segment covering 37–55 has biased composition (low complexity); it reads PSNKTTTHTKTTPWTWPWT.

Belongs to the ATPase protein 8 family. Component of the ATP synthase complex composed at least of ATP5F1A/subunit alpha, ATP5F1B/subunit beta, ATP5MC1/subunit c (homooctomer), MT-ATP6/subunit a, MT-ATP8/subunit 8, ATP5ME/subunit e, ATP5MF/subunit f, ATP5MG/subunit g, ATP5MK/subunit k, ATP5MJ/subunit j, ATP5F1C/subunit gamma, ATP5F1D/subunit delta, ATP5F1E/subunit epsilon, ATP5PF/subunit F6, ATP5PB/subunit b, ATP5PD/subunit d, ATP5PO/subunit OSCP. ATP synthase complex consists of a soluble F(1) head domain (subunits alpha(3) and beta(3)) - the catalytic core - and a membrane F(0) domain - the membrane proton channel (subunits c, a, 8, e, f, g, k and j). These two domains are linked by a central stalk (subunits gamma, delta, and epsilon) rotating inside the F1 region and a stationary peripheral stalk (subunits F6, b, d, and OSCP).

It localises to the mitochondrion membrane. Subunit 8, of the mitochondrial membrane ATP synthase complex (F(1)F(0) ATP synthase or Complex V) that produces ATP from ADP in the presence of a proton gradient across the membrane which is generated by electron transport complexes of the respiratory chain. ATP synthase complex consist of a soluble F(1) head domain - the catalytic core - and a membrane F(1) domain - the membrane proton channel. These two domains are linked by a central stalk rotating inside the F(1) region and a stationary peripheral stalk. During catalysis, ATP synthesis in the catalytic domain of F(1) is coupled via a rotary mechanism of the central stalk subunits to proton translocation. In vivo, can only synthesize ATP although its ATP hydrolase activity can be activated artificially in vitro. Part of the complex F(0) domain. The sequence is that of ATP synthase F(0) complex subunit 8 from Chaetura pelagica (Chimney swift).